Reading from the N-terminus, the 417-residue chain is Hydroxysteroid dehydrogenase-like protein 2 (417 aa).

Residues 17-23 (GASRGIG), lysine 42, and aspartate 74 each bind NADP(+). Tyrosine 168 serves as the catalytic Proton acceptor. An NADP(+)-binding site is contributed by lysine 172. The SCP2 domain maps to 306–414 (SSPLQETFKA…KLEKILGQMN (109 aa)).

Belongs to the short-chain dehydrogenases/reductases (SDR) family.

Its subcellular location is the peroxisome. The protein resides in the mitochondrion. In terms of biological role, has apparently no steroid dehydrogenase activity. Might act as a metabolic regulator that affects systemic adaptation to nutritional cues. The protein is Hydroxysteroid dehydrogenase-like protein 2 (hsdl2) of Xenopus tropicalis (Western clawed frog).